The primary structure comprises 475 residues: Ribulose bisphosphate carboxylase large chain (475 aa).

The propeptide occupies 1 to 2; sequence MS. Pro-3 carries the post-translational modification N-acetylproline. Residue Lys-14 is modified to N6,N6,N6-trimethyllysine. 2 residues coordinate substrate: Asn-123 and Thr-173. Lys-175 acts as the Proton acceptor in catalysis. Residue Lys-177 coordinates substrate. Lys-201, Asp-203, and Glu-204 together coordinate Mg(2+). Residue Lys-201 is modified to N6-carboxylysine. His-294 (proton acceptor) is an active-site residue. 3 residues coordinate substrate: Arg-295, His-327, and Ser-379.

Belongs to the RuBisCO large chain family. Type I subfamily. In terms of assembly, heterohexadecamer of 8 large chains and 8 small chains; disulfide-linked. The disulfide link is formed within the large subunit homodimers. Mg(2+) is required as a cofactor. The disulfide bond which can form in the large chain dimeric partners within the hexadecamer appears to be associated with oxidative stress and protein turnover.

It localises to the plastid. Its subcellular location is the chloroplast. It catalyses the reaction 2 (2R)-3-phosphoglycerate + 2 H(+) = D-ribulose 1,5-bisphosphate + CO2 + H2O. The catalysed reaction is D-ribulose 1,5-bisphosphate + O2 = 2-phosphoglycolate + (2R)-3-phosphoglycerate + 2 H(+). In terms of biological role, ruBisCO catalyzes two reactions: the carboxylation of D-ribulose 1,5-bisphosphate, the primary event in carbon dioxide fixation, as well as the oxidative fragmentation of the pentose substrate in the photorespiration process. Both reactions occur simultaneously and in competition at the same active site. This Viscum album (European mistletoe) protein is Ribulose bisphosphate carboxylase large chain.